A 142-amino-acid chain; its full sequence is MFQGASALTLDAKGRMSIPSRYRDALQTQAEGRVTITKHPDGCLLLFPRPEWEIFRDKVDKLPMNATWWKRIFLGNAMDVEMDGAGRVLVSPELRTAGGLEKEVTLLGMGRHFELWDAQTYAAKEQAAMAEGMPDALKDFTF.

2 consecutive SpoVT-AbrB domains span residues 5 to 51 (ASAL…PRPE) and 77 to 120 (AMDV…DAQT).

The protein belongs to the MraZ family. In terms of assembly, forms oligomers.

The protein resides in the cytoplasm. It localises to the nucleoid. In Paraburkholderia phytofirmans (strain DSM 17436 / LMG 22146 / PsJN) (Burkholderia phytofirmans), this protein is Transcriptional regulator MraZ.